Here is a 349-residue protein sequence, read N- to C-terminus: tRNA-specific 2-thiouridylase MnmA (349 aa).

ATP contacts are provided by residues 7–14 and L33; that span reads GLSGGVDS. C94 (nucleophile) is an active-site residue. A disulfide bridge links C94 with C193. Position 119 (G119) interacts with ATP. The interaction with tRNA stretch occupies residues 143–145; it reads KDQ. C193 serves as the catalytic Cysteine persulfide intermediate. The tract at residues 298-299 is interaction with tRNA; it reads RY.

Belongs to the MnmA/TRMU family.

The protein localises to the cytoplasm. It catalyses the reaction S-sulfanyl-L-cysteinyl-[protein] + uridine(34) in tRNA + AH2 + ATP = 2-thiouridine(34) in tRNA + L-cysteinyl-[protein] + A + AMP + diphosphate + H(+). Its function is as follows. Catalyzes the 2-thiolation of uridine at the wobble position (U34) of tRNA, leading to the formation of s(2)U34. The sequence is that of tRNA-specific 2-thiouridylase MnmA from Rippkaea orientalis (strain PCC 8801 / RF-1) (Cyanothece sp. (strain PCC 8801)).